A 126-amino-acid chain; its full sequence is Flagellar assembly factor FliW (126 aa).

The protein belongs to the FliW family. Interacts with translational regulator CsrA and flagellin(s).

It is found in the cytoplasm. Acts as an anti-CsrA protein, binds CsrA and prevents it from repressing translation of its target genes, one of which is flagellin. Binds to flagellin and participates in the assembly of the flagellum. This is Flagellar assembly factor FliW from Sulfurimonas denitrificans (strain ATCC 33889 / DSM 1251) (Thiomicrospira denitrificans (strain ATCC 33889 / DSM 1251)).